The chain runs to 128 residues: Dehydrin Xero 1 (128 aa).

Over residues 1–19 the composition is skewed to polar residues; sequence MESYQNQSGAQQTHQQLDQ. A disordered region spans residues 1-128; the sequence is MESYQNQSGA…IKEKLPGGHH (128 aa). 2 stretches are compositionally biased toward low complexity: residues 23-41 and 48-60; these read PFPATTGAYGTAGGAPAVA and GMLHRSGSSSSSS. A compositionally biased stretch (basic and acidic residues) spans 75 to 91; it reads GITEKIKEKLPGHHDSN. Residues 92–104 show a composition bias toward polar residues; that stretch reads KTSSLGSTTTAYD. Over residues 107–128 the composition is skewed to basic and acidic residues; sequence TVHHEKKGMMEKIKEKLPGGHH.

This sequence belongs to the plant dehydrin family.

The protein is Dehydrin Xero 1 (XERO1) of Arabidopsis thaliana (Mouse-ear cress).